The following is a 241-amino-acid chain: L-aspartate dehydrogenase (241 aa).

Residues 10–11 (NI), Asp28, 56–57 (AS), 63–64 (EY), 78–79 (IS), Ala109, and Asn164 each bind NAD(+). The active site involves His193.

This sequence belongs to the L-aspartate dehydrogenase family. Homodimer.

The enzyme catalyses L-aspartate + NADP(+) + H2O = oxaloacetate + NH4(+) + NADPH + H(+). It carries out the reaction L-aspartate + NAD(+) + H2O = oxaloacetate + NH4(+) + NADH + H(+). It participates in cofactor biosynthesis; NAD(+) biosynthesis; iminoaspartate from L-aspartate (dehydrogenase route): step 1/1. Competitively inhibited by L-malate and NH(4)(+). Specifically catalyzes the NAD or NADP-dependent dehydrogenation of L-aspartate to iminoaspartate. Does not show aspartate oxidase activity. Is also able to catalyze the reverse reaction, i.e. the reductive amination of oxaloacetate. The protein is L-aspartate dehydrogenase of Thermotoga maritima (strain ATCC 43589 / DSM 3109 / JCM 10099 / NBRC 100826 / MSB8).